The primary structure comprises 81 residues: Cortexin-2 (81 aa).

Residues 29–49 (TAFAFVGMLLVFLGLLIVRCF) traverse the membrane as a helical segment.

Belongs to the cortexin family.

Its subcellular location is the membrane. The chain is Cortexin-2 (ctxn2) from Danio rerio (Zebrafish).